Reading from the N-terminus, the 209-residue chain is Small ribosomal subunit protein uS3 (209 aa).

The KH type-2 domain maps to Ile-17–Lys-86.

This sequence belongs to the universal ribosomal protein uS3 family. Part of the 30S ribosomal subunit.

Its function is as follows. Binds the lower part of the 30S subunit head. This Thermococcus kodakarensis (strain ATCC BAA-918 / JCM 12380 / KOD1) (Pyrococcus kodakaraensis (strain KOD1)) protein is Small ribosomal subunit protein uS3.